The following is a 414-amino-acid chain: MIKAQSLDGLFEKLLDGKSIFKNKEVLRPSYTPDLLLHRNDQINSLATILVSALRGETPSNVLIYGKTGTGKTAVTRYVGKELERVSEDKSIFCSVVYINCEVIDTQYRLLANLARHFEEEVPMTGWPTDQVFMKFKEAIDSREQVIIIILDEIDKLIKKGDDVLYNLSRINTDLRKAKVSMIGVSNDLKFTEFLDPRVKSSLGEEELIFPPYDAEQISDILKQRAKMAYNDGVLGEMVIPLCAAFAAQEHGDARRALDLLRVSGEIAERENQPQVLEEHVRRAQEKIEIDRVVEVVRTLPTQSKLVLYSIILLRNRGREGKNVTTGEMYNVYRQLCHHIDVDILTQRRVTDLMSELDMLGIVNAVVVSKGRYGRTKEISLSVPVENTRKVLLEDYRLKPLVDFKASVFNKMFS.

ATP is bound by residues 70–74 (TGKTA), tyrosine 213, and arginine 225.

This sequence belongs to the CDC6/cdc18 family.

Involved in regulation of DNA replication. This Methanosarcina mazei (strain ATCC BAA-159 / DSM 3647 / Goe1 / Go1 / JCM 11833 / OCM 88) (Methanosarcina frisia) protein is ORC1-type DNA replication protein 1 (cdc6-1).